Here is a 428-residue protein sequence, read N- to C-terminus: Elongation factor 1-alpha (428 aa).

A tr-type G domain is found at 5–215; that stretch reads KPHVNIVFIG…ALDQIPEPPK (211 aa). Residues 14–21 form a G1 region; that stretch reads GHVDHGKS. Residue 14–21 participates in GTP binding; the sequence is GHVDHGKS. Ser21 lines the Mg(2+) pocket. Positions 68–72 are G2; sequence GITID. The segment at 89–92 is G3; the sequence is DAPG. GTP-binding positions include 89 to 93 and 144 to 147; these read DAPGH and NKMD. The G4 stretch occupies residues 144-147; that stretch reads NKMD. The tract at residues 181–183 is G5; it reads SAW.

The protein belongs to the TRAFAC class translation factor GTPase superfamily. Classic translation factor GTPase family. EF-Tu/EF-1A subfamily.

Its subcellular location is the cytoplasm. The enzyme catalyses GTP + H2O = GDP + phosphate + H(+). Its function is as follows. GTP hydrolase that promotes the GTP-dependent binding of aminoacyl-tRNA to the A-site of ribosomes during protein biosynthesis. The polypeptide is Elongation factor 1-alpha (Thermococcus onnurineus (strain NA1)).